The chain runs to 399 residues: Phosphoglycerate kinase (399 aa).

Substrate is bound by residues 22-24 (DLN), R37, 60-63 (HFGR), R119, and R152. ATP-binding positions include K202, E324, and 354 to 357 (GGDT).

This sequence belongs to the phosphoglycerate kinase family. Monomer.

Its subcellular location is the cytoplasm. The catalysed reaction is (2R)-3-phosphoglycerate + ATP = (2R)-3-phospho-glyceroyl phosphate + ADP. The protein operates within carbohydrate degradation; glycolysis; pyruvate from D-glyceraldehyde 3-phosphate: step 2/5. The polypeptide is Phosphoglycerate kinase (Sinorhizobium fredii (strain NBRC 101917 / NGR234)).